We begin with the raw amino-acid sequence, 565 residues long: Periplasmic trehalase (565 aa).

The first 30 residues, 1–30 (MKSPAPSRPQKMALIPACIFLCFAALSVQA), serve as a signal peptide directing secretion. Substrate contacts are provided by residues R152, 159–160 (WD), N196, 205–207 (RSQ), 277–279 (RPE), and G310. Residues D312 and E496 each act as proton donor/acceptor in the active site. E511 is a substrate binding site. The interval 540-565 (DNVPATHPTVKSATTQPSTKEAQPTP) is disordered. Positions 548–565 (TVKSATTQPSTKEAQPTP) are enriched in polar residues.

This sequence belongs to the glycosyl hydrolase 37 family. As to quaternary structure, monomer.

It localises to the periplasm. It carries out the reaction alpha,alpha-trehalose + H2O = alpha-D-glucose + beta-D-glucose. Provides the cells with the ability to utilize trehalose at high osmolarity by splitting it into glucose molecules that can subsequently be taken up by the phosphotransferase-mediated uptake system. The polypeptide is Periplasmic trehalase (Shigella flexneri).